Here is a 151-residue protein sequence, read N- to C-terminus: Globin-2 B chain (151 aa).

S1 bears the N-acetylserine mark. Residues V11–L151 form the Globin domain. H103 serves as a coordination point for heme b.

Belongs to the globin family. Heterotetramer of two alpha chains and two beta chains.

This chain is Globin-2 B chain, found in Anadara inaequivalvis (Inequivalve ark).